The primary structure comprises 524 residues: 2,3-bisphosphoglycerate-independent phosphoglycerate mutase (524 aa).

Mn(2+) is bound by residues aspartate 13 and serine 63. Residue serine 63 is the Phosphoserine intermediate of the active site. Residues histidine 124, 154–155 (RD), arginine 186, arginine 192, 262–265 (RADR), and lysine 337 contribute to the substrate site. The Mn(2+) site is built by aspartate 404, histidine 408, aspartate 445, histidine 446, and histidine 464.

This sequence belongs to the BPG-independent phosphoglycerate mutase family. In terms of assembly, monomer. Mn(2+) serves as cofactor.

It carries out the reaction (2R)-2-phosphoglycerate = (2R)-3-phosphoglycerate. Its pathway is carbohydrate degradation; glycolysis; pyruvate from D-glyceraldehyde 3-phosphate: step 3/5. Catalyzes the interconversion of 2-phosphoglycerate and 3-phosphoglycerate. The protein is 2,3-bisphosphoglycerate-independent phosphoglycerate mutase of Thermomicrobium roseum (strain ATCC 27502 / DSM 5159 / P-2).